The primary structure comprises 247 residues: MTSPAQRHMMRVSAAMTAQREAAPLRHATVYEQMLVKLAADQRTLKAIYSKELKAAKKRELLPFWLPWVNGVLELGKGAQDDILMTVMLWRLDTGDIAGALEIARYALKYGLTMPGKHRRTPPYMFTEEVALAAMRAHAAGESVDTRLLTETLELTATADMPDEVRAKLHKITGLFLRDGGDAAGALAHLQRATQLDCQAGVKKEIERLERELKPKPEPQPKAATRAPRKTRSVTPAKRGRPKKKAS.

Over residues 209–219 (LERELKPKPEP) the composition is skewed to basic and acidic residues. Residues 209–247 (LERELKPKPEPQPKAATRAPRKTRSVTPAKRGRPKKKAS) form a disordered region. Residues 214 to 245 (KPKPEPQPKAATRAPRKTRSVTPAKRGRPKKK) mediate DNA binding. Over residues 227 to 247 (APRKTRSVTPAKRGRPKKKAS) the composition is skewed to basic residues.

It to phage HP1 protein ORF19.

Functionally, m protein is probably an endonuclease which directs cos cleavage. The Q, P and M proteins are needed to package DNA into proheads and for the conversion of proheads to capsids. In Escherichia phage P2 (Bacteriophage P2), this protein is Terminase, endonuclease subunit (M).